A 787-amino-acid polypeptide reads, in one-letter code: Lon protease (787 aa).

Residues 12–210 (LPLIPLRGLA…LIYSILLEEI (199 aa)) enclose the Lon N-terminal domain. 362 to 369 (GPPGTGKT) serves as a coordination point for ATP. Residues 599-780 (NPQIGLVNGL…DEVLEQALLK (182 aa)) enclose the Lon proteolytic domain. Catalysis depends on residues serine 686 and lysine 729.

Belongs to the peptidase S16 family. As to quaternary structure, homohexamer. Organized in a ring with a central cavity.

It localises to the cytoplasm. The catalysed reaction is Hydrolysis of proteins in presence of ATP.. In terms of biological role, ATP-dependent serine protease that mediates the selective degradation of mutant and abnormal proteins as well as certain short-lived regulatory proteins. Required for cellular homeostasis and for survival from DNA damage and developmental changes induced by stress. Degrades polypeptides processively to yield small peptide fragments that are 5 to 10 amino acids long. Binds to DNA in a double-stranded, site-specific manner. The polypeptide is Lon protease (Clostridioides difficile (strain 630) (Peptoclostridium difficile)).